Consider the following 893-residue polypeptide: DNA endonuclease RBBP8 (893 aa).

Residues 22–45 are essential for binding to the MRN complex and for RPA focus formation on DNA damage; it reads ELWTKLKEYHDKEVQGLQVKVTKL. A coiled-coil region spans residues 35 to 84; it reads VQGLQVKVTKLKKERILDAQRLEEFFTKNQQLRDQQKVLQETIKILEDRL. Residues 45-160 are required for interaction with LMO4, probably by stabilizing the interaction through RPPB8 dimerization; it reads LKKERILDAQ…AELACEENII (116 aa). Residues lysine 62 and lysine 115 each participate in a glycyl lysine isopeptide (Lys-Gly) (interchain with G-Cter in SUMO2) cross-link. Residues 117-138 adopt a coiled-coil conformation; it reads ITELMNEKNTLQEENKKLSEQL. A Glycyl lysine isopeptide (Lys-Gly) (interchain with G-Cter in SUMO2) cross-link involves residue lysine 193. A phosphoserine mark is found at serine 233 and serine 276. Positions 296–307 are enriched in basic and acidic residues; sequence MESARSKEDSLR. The disordered stretch occupies residues 296–324; it reads MESARSKEDSLRFSDSASKTPPQEFTTRA. Positions 308–324 are enriched in polar residues; the sequence is FSDSASKTPPQEFTTRA. Threonine 315 carries the phosphothreonine modification. 3 positions are modified to phosphoserine: serine 325, serine 326, and serine 348. Glycyl lysine isopeptide (Lys-Gly) (interchain with G-Cter in SUMO2) cross-links involve residues lysine 359 and lysine 377. A Phosphoserine modification is found at serine 378. Residues lysine 394, lysine 403, lysine 409, and lysine 437 each participate in a glycyl lysine isopeptide (Lys-Gly) (interchain with G-Cter in SUMO2) cross-link. The PXDLS motif motif lies at 489-493; it reads PLDLS. Residues 508–556 are damage-recruitment motif; the sequence is NETSKNKLKQATIYEALKPIPKGSSSGRKALSGDCMPAKDSWETYCLQP. Lysine 525 participates in a covalent cross-link: Glycyl lysine isopeptide (Lys-Gly) (interchain with G-Cter in SUMO2); alternate. Glycyl lysine isopeptide (Lys-Gly) (interchain with G-Cter in SUMO2) cross-links involve residues lysine 529, lysine 570, and lysine 576. A Glycyl lysine isopeptide (Lys-Gly) (interchain with G-Cter in SUMO2); alternate cross-link involves residue lysine 602. Glycyl lysine isopeptide (Lys-Gly) (interchain with G-Cter in SUMO2) cross-links involve residues lysine 611, lysine 636, and lysine 638. Positions 639 to 683 are required for interaction with LMO4, probably by making physical contact with LMO4; sequence ALPSNQDTSFENIQWSVDPGADLSQYKMDVTVIDTKDSSHSRLGG. At serine 662 the chain carries Phosphoserine; by ATM. Residue lysine 674 forms a Glycyl lysine isopeptide (Lys-Gly) (interchain with G-Cter in SUMO2) linkage. Serine 677 carries the phosphoserine modification. A Glycyl lysine isopeptide (Lys-Gly) (interchain with G-Cter in SUMO2) cross-link involves residue lysine 716. Serine 720 is subject to Phosphoserine. Serine 742 bears the Phosphoserine; by ATM mark. A Glycyl lysine isopeptide (Lys-Gly) (interchain with G-Cter in SUMO2) cross-link involves residue lysine 778. Positions 836–838 match the KLHL15-binding motif; sequence FRY. A phosphothreonine mark is found at threonine 843 and threonine 855. Lysine 865 participates in a covalent cross-link: Glycyl lysine isopeptide (Lys-Gly) (interchain with G-Cter in SUMO2). The interval 869–893 is disordered; the sequence is DLSPRPKRRQPYNAVFSPKGKEQRT.

The protein belongs to the COM1/SAE2/CtIP family. As to quaternary structure, homotetramer; formed by antiparallel association of helical extensions protruding from the N-termini of two parallel coiled-coil dimers. Forms a dumbbell-shaped particle in which polar globular domains are held about 30 nm apart by a central rod. Homotetramerization is required for DNA-end resection and repair. Interacts (via the PXDLS motif) with CTBP1; the interaction is disrupted via binding of the adenovirus E1A to CTBP1. Component of the BRCA1-RBBP8 complex. Interacts (the Ser-326 phosphorylated form) with BRCA1 (via the C-terminal BRCT domains): the interaction occurs in the G2 phase, ubiquitinates RBBP8 and involves RBBP8 in BRCA1-dependent G2/M checkpoint control on DNA damage. Interacts with RB1. Interacts with the MRN complex. Interacts directly with MRE11; the interaction is required for efficient homologous recombination (HR) and regulation of the MRN complex. Interacts (when phosphorylated by CDK1) with NBN; promoting association with the MRN complex. Interacts with LMO4 (via the LIM zinc-binding 1 domain). Interacts with SIAH1. Interacts with RNF138. Interacts with EXD2. Interacts with CUL3 and KLHL15; this interaction leads to RBBP8 proteasomal degradation. Directly interacts with PIN1; this interaction depends upon RBBP8 phosphorylation, predominantly at Thr-315. Interacts with FZR1; this interaction leads to APC/C-mediated RBBP8 proteasomal degradation. Interacts with AUNIP; leading to recruit RBBP8 to sites of DNA damage. Interacts with SAMHD1. Interacts with HDGFL2. Hyperphosphorylation upon ionizing radiation results in dissociation from BRCA1. Phosphorylation at Thr-843 by CDK1 is essential for the recruitment to DNA and the DNA repair function. Phosphorylation at Thr-843 and Thr-855 promote interaction with NBN and recruitment to double-strand breaks (DSBs). Phosphorylated on Ser-326 as cells enter G2 phase. Phosphorylated at Ser-326 as cells enter G2 phase. This phosphorylation is required for binding BRCA1 and for the G2/M DNA damage transition checkpoint control. Phosphorylation at Thr-315 is required for PIN1-binding, while phosphorylation at Ser-276 serves as a PIN1 isomerization site. Phosphorylation at Thr-315 is cell-cycle dependent. It steadily increases during S phase, peaks at late S/G2 phase, and drops at G1. Phosphorylation is not required for tetramerization. Binds to DNA more strongly when dephosphorylated. In terms of processing, ubiquitinated. Ubiquitination at multiple sites by BRCA1 (via its N-terminal RING domain) does not lead to its proteasomal degradation but instead the ubiquitinated RBBP8 binds to chromatin following DNA damage and may play a role in G2/M checkpoint control. Ubiquitinated by RNF138 at its N-terminus. Ubiquitinated through 'Lys-48' by the E3 CUL3-KLHL15 complex; this modification leads to proteasomal degradation. Ubiquitinated by the E3 FZR1/APC/C complex; this modification leads to proteasomal degradation.

The protein resides in the nucleus. The protein localises to the chromosome. Its function is as follows. Endonuclease that cooperates with the MRE11-RAD50-NBN (MRN) complex in DNA-end resection, the first step of double-strand break (DSB) repair through the homologous recombination (HR) pathway. HR is restricted to S and G2 phases of the cell cycle and preferentially repairs DSBs resulting from replication fork collapse. Key determinant of DSB repair pathway choice, as it commits cells to HR by preventing classical non-homologous end-joining (NHEJ). Specifically promotes the endonuclease activity of the MRN complex to clear DNA ends containing protein adducts: recruited to DSBs by NBN following phosphorylation by CDK1, and promotes the endonuclease activity of MRE11 to clear protein-DNA adducts and generate clean double-strand break ends. Functions downstream of the MRN complex and ATM, promotes ATR activation and its recruitment to DSBs in the S/G2 phase facilitating the generation of ssDNA. Component of the BRCA1-RBBP8 complex that regulates CHEK1 activation and controls cell cycle G2/M checkpoints on DNA damage. During immunoglobulin heavy chain class-switch recombination, promotes microhomology-mediated alternative end joining (A-NHEJ) and plays an essential role in chromosomal translocations. Binds preferentially to DNA Y-junctions and to DNA substrates with blocked ends and promotes intermolecular DNA bridging. This is DNA endonuclease RBBP8 (Rbbp8) from Mus musculus (Mouse).